We begin with the raw amino-acid sequence, 288 residues long: Histone-lysine N-methyltransferase Suv4-20 (288 aa).

In terms of domain architecture, SET spans glutamine 128 to glycine 238.

This sequence belongs to the class V-like SAM-binding methyltransferase superfamily. Histone-lysine methyltransferase family. Suvar4-20 subfamily.

It localises to the nucleus. Its subcellular location is the chromosome. The enzyme catalyses N(6)-methyl-L-lysyl(20)-[histone H4] + S-adenosyl-L-methionine = N(6),N(6)-dimethyl-L-lysyl(20)-[histone H4] + S-adenosyl-L-homocysteine + H(+). It catalyses the reaction N(6),N(6)-dimethyl-L-lysyl(20)-[histone H4] + S-adenosyl-L-methionine = N(6),N(6),N(6)-trimethyl-L-lysyl(20)-[histone H4] + S-adenosyl-L-homocysteine + H(+). Functionally, histone methyltransferase that specifically di- and trimethylates 'Lys-20' of histone H4 (H4K20me2/me3). H4 'Lys-20' trimethylation represents a specific tag for epigenetic transcriptional repression. Contributes to dosage compensation of X chromosome-relative to autosome-linked gene expression, possibly by converting H4K20me1 to H4K20m2/me3 on autosomes. Involved in the regulation of growth and body fat metabolism downstream of the TOR complex 2 pathway. This Caenorhabditis elegans protein is Histone-lysine N-methyltransferase Suv4-20 (set-4).